The sequence spans 306 residues: tRNA dimethylallyltransferase (306 aa).

12–19 (GPTGVGKS) contacts ATP. 14 to 19 (TGVGKS) contributes to the substrate binding site.

It belongs to the IPP transferase family. As to quaternary structure, monomer. The cofactor is Mg(2+).

It carries out the reaction adenosine(37) in tRNA + dimethylallyl diphosphate = N(6)-dimethylallyladenosine(37) in tRNA + diphosphate. Its function is as follows. Catalyzes the transfer of a dimethylallyl group onto the adenine at position 37 in tRNAs that read codons beginning with uridine, leading to the formation of N6-(dimethylallyl)adenosine (i(6)A). This is tRNA dimethylallyltransferase from Desulfatibacillum aliphaticivorans.